The following is a 201-amino-acid chain: Probable quinol oxidase subunit 3 (201 aa).

5 helical membrane-spanning segments follow: residues 20 to 40 (LGFW…FATL), 62 to 82 (LVLI…ISIY), 91 to 111 (LMMF…GFEI), 133 to 153 (FFIL…WIIC), and 172 to 192 (FIVS…FTAV).

This sequence belongs to the cytochrome c oxidase subunit 3 family.

The protein localises to the cell membrane. The catalysed reaction is 2 a quinol + O2 = 2 a quinone + 2 H2O. Its function is as follows. Catalyzes quinol oxidation with the concomitant reduction of oxygen to water. The protein is Probable quinol oxidase subunit 3 (qoxC) of Staphylococcus haemolyticus (strain JCSC1435).